Consider the following 146-residue polypeptide: Large ribosomal subunit protein uL15 (146 aa).

Residues 1–65 (MSDIQLNSLK…GQMPLQRRLP (65 aa)) are disordered. Over residues 24 to 34 (RGIGSGLGKTA) the composition is skewed to gly residues.

The protein belongs to the universal ribosomal protein uL15 family. In terms of assembly, part of the 50S ribosomal subunit.

Binds to the 23S rRNA. The protein is Large ribosomal subunit protein uL15 of Bordetella avium (strain 197N).